The following is a 379-amino-acid chain: Cytochrome b (379 aa).

4 helical membrane passes run 33–53, 77–98, 113–133, and 178–198; these read FGSLLGMCLMIQILTGLFLAM, WLIRYLHANGASMFFICLFIHV, WNIGIILFLMTMATAFVGYVL, and FFAFHFILPFIIAAFALVHLL. The heme b site is built by H83 and H97. Heme b is bound by residues H182 and H196. A ubiquinone is bound at residue H201. 4 helical membrane passes run 226–246, 288–308, 320–340, and 347–367; these read TKDLLGIFLLLLVLMILALFF, LGGVLALVLSILILAAFPLLN, VTQVIYWIFIANLLVLTWIGG, and FTMIGQIASITYFAIITILMP.

This sequence belongs to the cytochrome b family. The cytochrome bc1 complex contains 11 subunits: 3 respiratory subunits (MT-CYB, CYC1 and UQCRFS1), 2 core proteins (UQCRC1 and UQCRC2) and 6 low-molecular weight proteins (UQCRH/QCR6, UQCRB/QCR7, UQCRQ/QCR8, UQCR10/QCR9, UQCR11/QCR10 and a cleavage product of UQCRFS1). This cytochrome bc1 complex then forms a dimer. The cofactor is heme b.

It localises to the mitochondrion inner membrane. In terms of biological role, component of the ubiquinol-cytochrome c reductase complex (complex III or cytochrome b-c1 complex) that is part of the mitochondrial respiratory chain. The b-c1 complex mediates electron transfer from ubiquinol to cytochrome c. Contributes to the generation of a proton gradient across the mitochondrial membrane that is then used for ATP synthesis. The sequence is that of Cytochrome b (MT-CYB) from Akodon fumeus (Smoky grass mouse).